Consider the following 357-residue polypeptide: 3-isopropylmalate dehydrogenase (357 aa).

Arginine 97, arginine 107, arginine 135, and aspartate 224 together coordinate substrate. 3 residues coordinate Mg(2+): aspartate 224, aspartate 248, and aspartate 252. Residue 282-294 participates in NAD(+) binding; sequence GSAPDIAGQDLAN.

Belongs to the isocitrate and isopropylmalate dehydrogenases family. LeuB type 1 subfamily. In terms of assembly, homodimer. Mg(2+) serves as cofactor. Mn(2+) is required as a cofactor.

Its subcellular location is the cytoplasm. It carries out the reaction (2R,3S)-3-isopropylmalate + NAD(+) = 4-methyl-2-oxopentanoate + CO2 + NADH. Its pathway is amino-acid biosynthesis; L-leucine biosynthesis; L-leucine from 3-methyl-2-oxobutanoate: step 3/4. In terms of biological role, catalyzes the oxidation of 3-carboxy-2-hydroxy-4-methylpentanoate (3-isopropylmalate) to 3-carboxy-4-methyl-2-oxopentanoate. The product decarboxylates to 4-methyl-2 oxopentanoate. This is 3-isopropylmalate dehydrogenase from Prochlorococcus marinus (strain MIT 9313).